Consider the following 238-residue polypeptide: Protein-lysine N-methyltransferase efm4 (238 aa).

Belongs to the class I-like SAM-binding methyltransferase superfamily. EFM4 family.

Its subcellular location is the cytoplasm. It is found in the nucleus. S-adenosyl-L-methionine-dependent protein-lysine N-methyltransferase that mono- and dimethylates elongation factor 1-alpha at 'Lys-316'. May play a role in intracellular transport. The chain is Protein-lysine N-methyltransferase efm4 from Schizosaccharomyces pombe (strain 972 / ATCC 24843) (Fission yeast).